A 337-amino-acid polypeptide reads, in one-letter code: Probable cytosolic iron-sulfur protein assembly protein 1 (337 aa).

WD repeat units follow at residues 11–50 (LHND…ENLL), 57–96 (VHKK…LEEG), 109–148 (GHEN…EEYE), 155–194 (EHSQ…WECA), 199–240 (GHEG…EDDQ), 252–290 (AHRS…SEVS), and 301–337 (AHTV…NYQD).

This sequence belongs to the WD repeat CIA1 family. Interacts with NAR1.

The protein resides in the cytoplasm. Its subcellular location is the nucleus. Its function is as follows. Essential component of the cytosolic iron-sulfur (Fe/S) protein assembly machinery. Required for the maturation of extramitochondrial Fe/S proteins. In Candida glabrata (strain ATCC 2001 / BCRC 20586 / JCM 3761 / NBRC 0622 / NRRL Y-65 / CBS 138) (Yeast), this protein is Probable cytosolic iron-sulfur protein assembly protein 1.